Here is a 276-residue protein sequence, read N- to C-terminus: Diaminopimelate epimerase (276 aa).

Substrate is bound by residues asparagine 13, glutamine 46, and asparagine 66. Cysteine 75 functions as the Proton donor in the catalytic mechanism. Substrate-binding positions include 76–77 (GN), asparagine 159, asparagine 192, and 210–211 (ER). Catalysis depends on cysteine 219, which acts as the Proton acceptor. 220–221 (GT) lines the substrate pocket.

This sequence belongs to the diaminopimelate epimerase family. In terms of assembly, homodimer.

Its subcellular location is the cytoplasm. The enzyme catalyses (2S,6S)-2,6-diaminopimelate = meso-2,6-diaminopimelate. Its pathway is amino-acid biosynthesis; L-lysine biosynthesis via DAP pathway; DL-2,6-diaminopimelate from LL-2,6-diaminopimelate: step 1/1. In terms of biological role, catalyzes the stereoinversion of LL-2,6-diaminopimelate (L,L-DAP) to meso-diaminopimelate (meso-DAP), a precursor of L-lysine and an essential component of the bacterial peptidoglycan. This is Diaminopimelate epimerase from Pseudomonas putida (strain GB-1).